Reading from the N-terminus, the 1014-residue chain is C2 domain-containing protein 5 (1014 aa).

The C2 domain maps to M1 to F109. Positions 19, 26, 76, 78, 81, and 84 each coordinate Ca(2+). 4 disordered regions span residues L274 to G328, E639 to D669, A801 to G878, and E992 to T1014. Polar residues predominate over residues N275–Y292. The span at S293–G318 shows a compositional bias: low complexity. Over residues M319–G328 the composition is skewed to gly residues. The span at S830 to S840 shows a compositional bias: polar residues. Residues A993–A1006 show a composition bias toward low complexity.

Ca(2+) is required as a cofactor.

It localises to the cytoplasmic vesicle membrane. Its subcellular location is the cytoplasm. The protein resides in the cell cortex. It is found in the cell membrane. The protein localises to the cell projection. It localises to the ruffle. In terms of biological role, may be required for insulin-stimulated glucose transport and glucose transporter SLC2A4/GLUT4 translocation from intracellular glucose storage vesicle (GSV) to the plasma membrane (PM) in adipocytes. May bind phospholipid membranes in a calcium-dependent manner. The sequence is that of C2 domain-containing protein 5 (c2cd5) from Xenopus tropicalis (Western clawed frog).